The primary structure comprises 198 residues: Phosphoheptose isomerase (198 aa).

Residues 36–198 (MARALGADRK…DRTLFGGPGG (163 aa)) enclose the SIS domain. 51-53 (NGG) provides a ligand contact to substrate. 2 residues coordinate Zn(2+): histidine 60 and glutamate 64. Substrate contacts are provided by residues glutamate 64, 93–94 (ND), 119–121 (STS), serine 124, and glutamine 174. 2 residues coordinate Zn(2+): glutamine 174 and histidine 182.

This sequence belongs to the SIS family. GmhA subfamily. Homotetramer. It depends on Zn(2+) as a cofactor.

It localises to the cytoplasm. It catalyses the reaction 2 D-sedoheptulose 7-phosphate = D-glycero-alpha-D-manno-heptose 7-phosphate + D-glycero-beta-D-manno-heptose 7-phosphate. It functions in the pathway carbohydrate biosynthesis; D-glycero-D-manno-heptose 7-phosphate biosynthesis; D-glycero-alpha-D-manno-heptose 7-phosphate and D-glycero-beta-D-manno-heptose 7-phosphate from sedoheptulose 7-phosphate: step 1/1. Its function is as follows. Catalyzes the isomerization of sedoheptulose 7-phosphate in D-glycero-D-manno-heptose 7-phosphate. This chain is Phosphoheptose isomerase, found in Halorhodospira halophila (strain DSM 244 / SL1) (Ectothiorhodospira halophila (strain DSM 244 / SL1)).